A 416-amino-acid polypeptide reads, in one-letter code: PDZ and LIM domain protein 7 (416 aa).

One can recognise a PDZ domain in the interval M1–Q85. Disordered regions lie at residues C145–P191 and T202–R221. Over residues P168–P181 the composition is skewed to low complexity. 3 consecutive LIM zinc-binding domains span residues P239–A297, P298–T357, and K358–V416.

Interacts with various PKC isoforms through the LIM zinc-binding domains. Interacts with TPM2. Interacts with TBX4 and TBX5.

It is found in the cytoplasm. It localises to the cytoskeleton. The protein resides in the myofibril. The protein localises to the sarcomere. Its subcellular location is the z line. In terms of biological role, may function as a scaffold on which the coordinated assembly of proteins can occur. May play a role as an adapter that, via its PDZ domain, localizes LIM-binding proteins to actin filaments of both skeletal muscle and nonmuscle tissues. May be involved in bone formation. This is PDZ and LIM domain protein 7 (PDLIM7) from Gallus gallus (Chicken).